The following is a 345-amino-acid chain: Protein SHI RELATED SEQUENCE 7 (345 aa).

The interval 7 to 28 (LGGRDHNKQDHHQEKDHNEDKS) is disordered. Residues 9–28 (GRDHNKQDHHQEKDHNEDKS) show a composition bias toward basic and acidic residues. Residues Cys-119, Cys-122, Cys-130, Cys-135, Cys-139, and Cys-146 each coordinate Zn(2+). A DNA-binding region (zn(2)-C6 fungal-type; degenerate) is located at residues 119 to 146 (CQDCGNQAKKDCPHMRCRTCCKSRGFDC). The interval 168 to 200 (AVLPAKRIRDANSRGGGDDDDDDKEDEKNDSCG) is disordered. The short motif at 256–259 (IGGH) is the Required for homo- and heterodimerization element.

Belongs to the SHI protein family. Mainly expressed in the filaments of flowers, the shoot apex regions and pollen. Also present in leaves.

It is found in the nucleus. Its function is as follows. Transcription activator that binds DNA on 5'-ACTCTAC-3' and promotes auxin homeostasis-regulating gene expression (e.g. YUC genes), as well as genes affecting stamen development, cell expansion and timing of flowering. Synergistically with other SHI-related proteins, regulates gynoecium, stamen and leaf development in a dose-dependent manner, controlling apical-basal patterning. Promotes style and stigma formation, and influences vascular development during gynoecium development. May also have a role in the formation and/or maintenance of the shoot apical meristem (SAM). Regulates anther dehiscence and floral development. The polypeptide is Protein SHI RELATED SEQUENCE 7 (SRS7) (Arabidopsis thaliana (Mouse-ear cress)).